We begin with the raw amino-acid sequence, 149 residues long: Transcriptional regulator MraZ (149 aa).

SpoVT-AbrB domains are found at residues 5 to 52 and 81 to 124; these read ITTL…PLPE and AEEC…DSMV.

It belongs to the MraZ family. Forms oligomers.

The protein localises to the cytoplasm. It localises to the nucleoid. The sequence is that of Transcriptional regulator MraZ from Nitrosococcus oceani (strain ATCC 19707 / BCRC 17464 / JCM 30415 / NCIMB 11848 / C-107).